The following is a 148-amino-acid chain: Probable transporter PD_1893 (148 aa).

The next 4 membrane-spanning stretches (helical) occupy residues 11 to 31 (FTVA…SEMI), 48 to 68 (NPSL…GMAL), 93 to 113 (IVFG…CPGP), and 118 to 138 (LSTG…GMII).

The protein belongs to the TsuA/YedE (TC 9.B.102) family.

It localises to the cell inner membrane. In Xylella fastidiosa (strain Temecula1 / ATCC 700964), this protein is Probable transporter PD_1893.